The sequence spans 336 residues: Dihydroorotate dehydrogenase (quinone) (336 aa).

FMN-binding positions include 62–66 (AGLDK) and Thr-86. Position 66 (Lys-66) interacts with substrate. Residue 111-115 (NRMGF) coordinates substrate. Residues Asn-139 and Asn-172 each coordinate FMN. Asn-172 serves as a coordination point for substrate. The Nucleophile role is filled by Ser-175. Asn-177 is a substrate binding site. FMN contacts are provided by Lys-217 and Thr-245. A substrate-binding site is contributed by 246–247 (NT). Residues Gly-268, Gly-297, and 318-319 (YT) contribute to the FMN site.

This sequence belongs to the dihydroorotate dehydrogenase family. Type 2 subfamily. Monomer. FMN serves as cofactor.

It localises to the cell membrane. The enzyme catalyses (S)-dihydroorotate + a quinone = orotate + a quinol. The protein operates within pyrimidine metabolism; UMP biosynthesis via de novo pathway; orotate from (S)-dihydroorotate (quinone route): step 1/1. In terms of biological role, catalyzes the conversion of dihydroorotate to orotate with quinone as electron acceptor. The sequence is that of Dihydroorotate dehydrogenase (quinone) from Pseudoalteromonas translucida (strain TAC 125).